Consider the following 417-residue polypeptide: Histidine--tRNA ligase (417 aa).

Belongs to the class-II aminoacyl-tRNA synthetase family. As to quaternary structure, homodimer.

The protein localises to the cytoplasm. The catalysed reaction is tRNA(His) + L-histidine + ATP = L-histidyl-tRNA(His) + AMP + diphosphate + H(+). This Nitratidesulfovibrio vulgaris (strain DP4) (Desulfovibrio vulgaris) protein is Histidine--tRNA ligase.